The primary structure comprises 1004 residues: Receptor-type tyrosine-protein phosphatase N2 (1004 aa).

A signal peptide spans methionine 1–alanine 27. The tract at residues methionine 1–serine 409 is involved in localization to secretory granules; interaction with CPE. The Extracellular portion of the chain corresponds to arginine 28–lysine 603. Arginine 259 is subject to Omega-N-methylarginine. Disordered stretches follow at residues alanine 274–methionine 294, glutamine 333–glutamate 360, and aspartate 393–glutamate 459. Serine 340 bears the Phosphoserine mark. Composition is skewed to basic and acidic residues over residues glutamine 341–alanine 356 and lysine 407–glutamine 418. Acidic residues predominate over residues proline 419 to alanine 430. A phosphoserine mark is found at serine 424 and serine 425. Positions glycine 431–asparagine 450 are enriched in basic and acidic residues. Asparagine 553 carries N-linked (GlcNAc...) asparagine glycosylation. The chain crosses the membrane as a helical span at residues phenylalanine 604–leucine 624. The Cytoplasmic segment spans residues alanine 625 to glutamine 1004. Positions tyrosine 655–alanine 664 match the Tyrosine-based internalization motif motif. The disordered stretch occupies residues valine 665–serine 710. Over residues serine 677 to serine 687 the composition is skewed to polar residues. Serine 681 carries the post-translational modification Phosphoserine; by PKA. Serine 687 is subject to Phosphoserine. Over residues proline 694 to serine 710 the composition is skewed to low complexity. Threonine 700 bears the Phosphothreonine; by PKA mark. The Tyrosine-protein phosphatase domain occupies leucine 734 to glutamate 994. Residues aspartate 902 and cysteine 934–arginine 940 contribute to the substrate site. Catalysis depends on cysteine 934, which acts as the Phosphocysteine intermediate. Lysine 959 carries the N6-acetyllysine modification. Residue glutamine 979 coordinates substrate. Residues glutamate 993–leucine 999 carry the Leucine-based sorting signal motif.

It belongs to the protein-tyrosine phosphatase family. Receptor class 8 subfamily. In terms of assembly, self-associates. Interacts (via cytoplasmic domain) with PTPRN (via cytoplasmic domain). Interacts (precursor form) with CPE. Interacts with HAP1. Interacts with AP2A1 or AP2A2 and AP1G1; indicative for an association with adaptor protein complex 2 (AP-2) and adaptor protein complex 1 (AP-1). Interacts with AP2M1; indicative for an association with adaptor protein complex 2 (AP-2). Interacts with MYO5A. In terms of processing, subject to proteolytic cleavage at multiple sites.

It is found in the cytoplasmic vesicle. The protein localises to the secretory vesicle membrane. The protein resides in the secretory vesicle. It localises to the synaptic vesicle membrane. It carries out the reaction O-phospho-L-tyrosyl-[protein] + H2O = L-tyrosyl-[protein] + phosphate. Its function is as follows. Plays a role in vesicle-mediated secretory processes. Required for normal accumulation of secretory vesicles in hippocampus, pituitary and pancreatic islets. Required for the accumulation of normal levels of insulin-containing vesicles and preventing their degradation. Plays a role in insulin secretion in response to glucose stimuli. Required for normal accumulation of the neurotransmitters norepinephrine, dopamine and serotonin in the brain. In females, but not in males, required for normal accumulation and secretion of pituitary hormones, such as luteinizing hormone (LH) and follicle-stimulating hormone (FSH). Required to maintain normal levels of renin expression and renin release. May regulate catalytic active protein-tyrosine phosphatases such as PTPRA through dimerization. Has phosphatidylinositol phosphatase activity; the PIPase activity is involved in its ability to regulate insulin secretion. Can dephosphorylate phosphatidylinositol 4,5-biphosphate, phosphatidylinositol 5-phosphate and phosphatidylinositol 3-phosphate. Regulates PI(4,5)P2 level in the plasma membrane and localization of cofilin at the plasma membrane and thus is indirectly involved in regulation of actin dynamics related to cell migration and metastasis; upon hydrolysis of PI(4,5)P2 cofilin is released from the plasma membrane and acts in the cytoplasm in severing F-actin filaments. The sequence is that of Receptor-type tyrosine-protein phosphatase N2 (Ptprn2) from Rattus norvegicus (Rat).